A 395-amino-acid chain; its full sequence is Methylthioribose-1-phosphate isomerase (395 aa).

The active-site Proton donor is Asp258.

This sequence belongs to the eIF-2B alpha/beta/delta subunits family. MtnA subfamily.

The protein localises to the cytoplasm. It localises to the nucleus. It carries out the reaction 5-(methylsulfanyl)-alpha-D-ribose 1-phosphate = 5-(methylsulfanyl)-D-ribulose 1-phosphate. Its pathway is amino-acid biosynthesis; L-methionine biosynthesis via salvage pathway; L-methionine from S-methyl-5-thio-alpha-D-ribose 1-phosphate: step 1/6. Catalyzes the interconversion of methylthioribose-1-phosphate (MTR-1-P) into methylthioribulose-1-phosphate (MTRu-1-P). The chain is Methylthioribose-1-phosphate isomerase from Podospora anserina (strain S / ATCC MYA-4624 / DSM 980 / FGSC 10383) (Pleurage anserina).